An 81-amino-acid chain; its full sequence is Conotoxin Eb11.3 (81 aa).

A signal peptide spans 1–23; sequence MMFRLTSVWCLLVIVLLNSAVDG. Disulfide bonds link Cys27–Cys41, Cys34–Cys48, Cys40–Cys56, and Cys47–Cys62. At Leu69 the chain carries Leucine amide. A propeptide spanning residues 73 to 81 is cleaved from the precursor; the sequence is AQYKRFFRR.

The protein belongs to the conotoxin I2 superfamily. As to expression, expressed by the venom duct.

Its subcellular location is the secreted. The polypeptide is Conotoxin Eb11.3 (Conus eburneus (Ivory cone)).